The sequence spans 277 residues: Bifunctional protein FolD (277 aa).

NADP(+) contacts are provided by residues glycine 164 to serine 166, serine 189, and threonine 230.

This sequence belongs to the tetrahydrofolate dehydrogenase/cyclohydrolase family. Homodimer.

It catalyses the reaction (6R)-5,10-methylene-5,6,7,8-tetrahydrofolate + NADP(+) = (6R)-5,10-methenyltetrahydrofolate + NADPH. The enzyme catalyses (6R)-5,10-methenyltetrahydrofolate + H2O = (6R)-10-formyltetrahydrofolate + H(+). It participates in one-carbon metabolism; tetrahydrofolate interconversion. Functionally, catalyzes the oxidation of 5,10-methylenetetrahydrofolate to 5,10-methenyltetrahydrofolate and then the hydrolysis of 5,10-methenyltetrahydrofolate to 10-formyltetrahydrofolate. In Clostridium perfringens (strain ATCC 13124 / DSM 756 / JCM 1290 / NCIMB 6125 / NCTC 8237 / Type A), this protein is Bifunctional protein FolD.